The primary structure comprises 177 residues: Nicotinamide-nucleotide adenylyltransferase (177 aa).

This sequence belongs to the archaeal NMN adenylyltransferase family.

The protein resides in the cytoplasm. It carries out the reaction beta-nicotinamide D-ribonucleotide + ATP + H(+) = diphosphate + NAD(+). It functions in the pathway cofactor biosynthesis; NAD(+) biosynthesis; NAD(+) from nicotinamide D-ribonucleotide: step 1/1. This chain is Nicotinamide-nucleotide adenylyltransferase, found in Halobacterium salinarum (strain ATCC 29341 / DSM 671 / R1).